The primary structure comprises 951 residues: Valine--tRNA ligase (951 aa).

Residues 40–50 (PNVTGSLHMGH) carry the 'HIGH' region motif. Residues 551–555 (KMSKS) carry the 'KMSKS' region motif. K554 is an ATP binding site. A coiled-coil region spans residues 879-950 (MAGLIDVEAE…LLEQKAKIES (72 aa)).

This sequence belongs to the class-I aminoacyl-tRNA synthetase family. ValS type 1 subfamily. In terms of assembly, monomer.

The protein localises to the cytoplasm. The catalysed reaction is tRNA(Val) + L-valine + ATP = L-valyl-tRNA(Val) + AMP + diphosphate. Catalyzes the attachment of valine to tRNA(Val). As ValRS can inadvertently accommodate and process structurally similar amino acids such as threonine, to avoid such errors, it has a 'posttransfer' editing activity that hydrolyzes mischarged Thr-tRNA(Val) in a tRNA-dependent manner. The sequence is that of Valine--tRNA ligase from Pseudoalteromonas translucida (strain TAC 125).